The primary structure comprises 20 residues: DSPTPNTYNIYYGTAASAXN.

The protein resides in the plastid. The protein localises to the chloroplast thylakoid lumen. This chain is Thylakoid lumenal 18.4 kDa protein, found in Spinacia oleracea (Spinach).